Reading from the N-terminus, the 129-residue chain is Ribosome-binding factor A (129 aa).

It belongs to the RbfA family. As to quaternary structure, monomer. Binds 30S ribosomal subunits, but not 50S ribosomal subunits or 70S ribosomes.

It localises to the cytoplasm. In terms of biological role, one of several proteins that assist in the late maturation steps of the functional core of the 30S ribosomal subunit. Associates with free 30S ribosomal subunits (but not with 30S subunits that are part of 70S ribosomes or polysomes). Required for efficient processing of 16S rRNA. May interact with the 5'-terminal helix region of 16S rRNA. This chain is Ribosome-binding factor A, found in Marinomonas sp. (strain MWYL1).